A 37-amino-acid polypeptide reads, in one-letter code: Large ribosomal subunit protein bL36 (37 aa).

It belongs to the bacterial ribosomal protein bL36 family.

The chain is Large ribosomal subunit protein bL36 from Koribacter versatilis (strain Ellin345).